Here is a 160-residue protein sequence, read N- to C-terminus: Cytochrome b6-f complex subunit 4 (160 aa).

A run of 3 helical transmembrane segments spans residues 36-56 (LLYI…GLAV), 95-115 (LLGV…PFLE), and 131-151 (TVFL…TLPI).

The protein belongs to the cytochrome b family. PetD subfamily. The 4 large subunits of the cytochrome b6-f complex are cytochrome b6, subunit IV (17 kDa polypeptide, petD), cytochrome f and the Rieske protein, while the 4 small subunits are petG, petL, petM and petN. The complex functions as a dimer.

It is found in the plastid. The protein resides in the chloroplast thylakoid membrane. Its function is as follows. Component of the cytochrome b6-f complex, which mediates electron transfer between photosystem II (PSII) and photosystem I (PSI), cyclic electron flow around PSI, and state transitions. This is Cytochrome b6-f complex subunit 4 from Oryza nivara (Indian wild rice).